The chain runs to 346 residues: Glycerol-1-phosphate dehydrogenase [NAD(P)+] (346 aa).

Residues 93-97 (GTIID) and 115-118 (TTAS) contribute to the NAD(+) site. Residue Asp120 coordinates substrate. An NAD(+)-binding site is contributed by Ser124. Substrate is bound at residue Asp167. Positions 167 and 247 each coordinate Zn(2+). His251 serves as a coordination point for substrate. His263 is a Zn(2+) binding site.

The protein belongs to the glycerol-1-phosphate dehydrogenase family. It depends on Zn(2+) as a cofactor.

It localises to the cytoplasm. It catalyses the reaction sn-glycerol 1-phosphate + NAD(+) = dihydroxyacetone phosphate + NADH + H(+). It carries out the reaction sn-glycerol 1-phosphate + NADP(+) = dihydroxyacetone phosphate + NADPH + H(+). It functions in the pathway membrane lipid metabolism; glycerophospholipid metabolism. Catalyzes the NAD(P)H-dependent reduction of dihydroxyacetonephosphate (DHAP or glycerone phosphate) to glycerol 1-phosphate (G1P). The G1P thus generated is used as the glycerophosphate backbone of phospholipids in the cellular membranes of Archaea. This Pyrococcus furiosus (strain ATCC 43587 / DSM 3638 / JCM 8422 / Vc1) protein is Glycerol-1-phosphate dehydrogenase [NAD(P)+].